The chain runs to 150 residues: Large ribosomal subunit protein bL9 (150 aa).

Belongs to the bacterial ribosomal protein bL9 family.

Binds to the 23S rRNA. The chain is Large ribosomal subunit protein bL9 from Polynucleobacter necessarius subsp. necessarius (strain STIR1).